A 360-amino-acid polypeptide reads, in one-letter code: Vomilenine reductase (360 aa).

An Enoyl reductase (ER) domain is found at 23 to 351 (GLLSPFNFSR…KADVKYRFVI (329 aa)). Residue Cys50 coordinates Zn(2+). Residue Ser52 participates in an alcohol binding. An NADP(+)-binding site is contributed by Ser52. Asp53, His72, Glu73, Cys103, Cys106, Cys109, Cys117, and Cys166 together coordinate Zn(2+). His72 serves as a coordination point for an alcohol. The NADP(+) site is built by Leu192, Gly194, Leu195, Ser214, Thr215, Ser216, Lys219, Lys220, Val277, Ala279, Ser301, and Arg348.

The protein belongs to the zinc-containing alcohol dehydrogenase family. Class-P subfamily. In terms of assembly, homodimer. The cofactor is Zn(2+). Confined to roots.

Its subcellular location is the cytoplasm. The enzyme catalyses (2R)-1,2-dihydrovomilenine + NADP(+) = vomilenine + NADPH + H(+). Its pathway is alkaloid biosynthesis; ajmaline biosynthesis. With respect to regulation, inhibited by EDTA and p-hydroxymercuribenzoate, a sulfhydryl reagent. In terms of biological role, alcohol dehydrogenase involved in the biosynthesis of ajmaline-type monoterpenoid indole alkaloids (MIAs) natural products, important plant-derived pharmaceuticals used in the therapy of heart disorders. Catalyzes the conversion of vomilenine to 1,2-dihydrovomilenine, an intermediate chemical in the biosynthesis of ajmaline. The polypeptide is Vomilenine reductase (Rauvolfia serpentina (Serpentine wood)).